The sequence spans 220 residues: dTTP/UTP pyrophosphatase (220 aa).

Residue Asp83 is the Proton acceptor of the active site.

It belongs to the Maf family. YhdE subfamily. A divalent metal cation serves as cofactor.

Its subcellular location is the cytoplasm. The catalysed reaction is dTTP + H2O = dTMP + diphosphate + H(+). It catalyses the reaction UTP + H2O = UMP + diphosphate + H(+). Functionally, nucleoside triphosphate pyrophosphatase that hydrolyzes dTTP and UTP. May have a dual role in cell division arrest and in preventing the incorporation of modified nucleotides into cellular nucleic acids. This is dTTP/UTP pyrophosphatase from Syntrophotalea carbinolica (strain DSM 2380 / NBRC 103641 / GraBd1) (Pelobacter carbinolicus).